A 363-amino-acid chain; its full sequence is UDP-N-acetylglucosamine--N-acetylmuramyl-(pentapeptide) pyrophosphoryl-undecaprenol N-acetylglucosamine transferase (363 aa).

UDP-N-acetyl-alpha-D-glucosamine-binding positions include 10-12, Asn-124, Ser-195, Ile-250, and Gln-295; that span reads TGG.

Belongs to the glycosyltransferase 28 family. MurG subfamily.

It localises to the cell membrane. It catalyses the reaction di-trans,octa-cis-undecaprenyl diphospho-N-acetyl-alpha-D-muramoyl-L-alanyl-D-glutamyl-meso-2,6-diaminopimeloyl-D-alanyl-D-alanine + UDP-N-acetyl-alpha-D-glucosamine = di-trans,octa-cis-undecaprenyl diphospho-[N-acetyl-alpha-D-glucosaminyl-(1-&gt;4)]-N-acetyl-alpha-D-muramoyl-L-alanyl-D-glutamyl-meso-2,6-diaminopimeloyl-D-alanyl-D-alanine + UDP + H(+). It functions in the pathway cell wall biogenesis; peptidoglycan biosynthesis. Functionally, cell wall formation. Catalyzes the transfer of a GlcNAc subunit on undecaprenyl-pyrophosphoryl-MurNAc-pentapeptide (lipid intermediate I) to form undecaprenyl-pyrophosphoryl-MurNAc-(pentapeptide)GlcNAc (lipid intermediate II). The polypeptide is UDP-N-acetylglucosamine--N-acetylmuramyl-(pentapeptide) pyrophosphoryl-undecaprenol N-acetylglucosamine transferase (Listeria monocytogenes serotype 4b (strain CLIP80459)).